Here is a 1184-residue protein sequence, read N- to C-terminus: MMQLLQLLLGLLGPGGYLFLLGDCQEVTTLTVKYQVSEEVPSGTVIGKLSQELGREERRRQAGAAFQVLQLPQALPIQVDSEEGLLSTGRRLDREQLCRQWDPCLVSFDVLATGDLALIHVEIQVLDINDHQPRFPKGEQELEISESASLRTRIPLDRALDPDTGPNTLHTYTLSPSEHFALDVIVGPDETKHAELIVVKELDREIHSFFDLVLTAYDNGNPPKSGTSLVKVNVLDSNDNSPAFAESSLALEIQEDAAPGTLLIKLTATDPDQGPNGEVEFFLSKHMPPEVLDTFSIDAKTGQVILRRPLDYEKNPAYEVDVQARDLGPNPIPAHCKVLIKVLDVNDNIPSIHVTWASQPSLVSEALPKDSFIALVMADDLDSGHNGLVHCWLSQELGHFRLKRTNGNTYMLLTNATLDREQWPKYTLTLLAQDQGLQPLSAKKQLSIQISDINDNAPVFEKSRYEVSTRENNLPSLHLITIKAHDADLGINGKVSYRIQDSPVAHLVAIDSNTGEVTAQRSLNYEEMAGFEFQVIAEDSGQPMLASSVSVWVSLLDANDNAPEVVQPVLSDGKASLSVLVNASTGHLLVPIETPNGLGPAGTDTPPLATHSSRPFLLTTIVARDADSGANGEPLYSIRSGNEAHLFILNPHTGQLFVNVTNASSLIGSEWELEIVVEDQGSPPLQTRALLRVMFVTSVDHLRDSARKPGALSMSMLTVICLAVLLGIFGLILALFMSICRTEKKDNRAYNCREAESTYRQQPKRPQKHIQKADIHLVPVLRGQAGEPCEVGQSHKDVDKEAMMEAGWDPCLQAPFHLTPTLYRTLRNQGNQGAPAESREVLQDTVNLLFNHPRQRNASRENLNLPEPQPATGQPRSRPLKVAGSPTGRLAGDQGSEEAPQRPPASSATLRRQRHLNGKVSPEKESGPRQILRSLVRLSVAAFAERNPVEELTVDSPPVQQISQLLSLLHQGQFQPKPNHRGNKYLAKPGGSRSAIPDTDGPSARAGGQTDPEQEEGPLDPEEDLSVKQLLEEELSSLLDPSTGLALDRLSAPDPAWMARLSLPLTTNYRDNVISPDAAATEEPRTFQTFGKAEAPELSPTGTRLASTFVSEMSSLLEMLLEQRSSMPVEAASEALRRLSVCGRTLSLDLATSAASGMKVQGDPGGKTGTEGKSRGSSSSSRCL.

The first 24 residues, 1 to 24 (MMQLLQLLLGLLGPGGYLFLLGDC), serve as a signal peptide directing secretion. Residues 25-718 (QEVTTLTVKY…PGALSMSMLT (694 aa)) lie on the Extracellular side of the membrane. Cadherin domains follow at residues 28 to 135 (TTLT…QPRF), 136 to 244 (PKGE…SPAF), 245 to 352 (AESS…IPSI), 355 to 460 (TWAS…APVF), and 461 to 565 (EKSR…APEV). Residue N415 is glycosylated (N-linked (GlcNAc...) asparagine). N-linked (GlcNAc...) asparagine glycans are attached at residues N582, N659, and N662. The Cadherin 6 domain occupies 600–711 (PAGTDTPPLA…LRDSARKPGA (112 aa)). Residues 719-739 (VICLAVLLGIFGLILALFMSI) traverse the membrane as a helical segment. Residues 740-1184 (CRTEKKDNRA…RGSSSSSRCL (445 aa)) are Cytoplasmic-facing. 2 disordered regions span residues 854–928 (RQRN…ESGP) and 973–1023 (QFQP…DPEE). A Phosphoserine modification is found at S859. Residues 1012-1023 (PEQEEGPLDPEE) are compositionally biased toward acidic residues. S1062 carries the post-translational modification Phosphoserine. Residues 1153–1184 (SAASGMKVQGDPGGKTGTEGKSRGSSSSSRCL) form a disordered region. Low complexity predominate over residues 1175–1184 (RGSSSSSRCL).

Post-translationally, cleaved by ADAM10 close to the transmembrane domain to release the Protocadherin-12, secreted form in the serum. Cleavage results in reduced cellular adhesion in a cell migration assay. Expressed in highly vascularized tissues including the heart and placenta, but most tissues contain a low level of expression. Prominent expression in the spleen. Present in villous and extravillous trophoblast (at protein level).

The protein localises to the cell membrane. Its subcellular location is the cell junction. It is found in the secreted. Its function is as follows. Cellular adhesion molecule that may play an important role in cell-cell interactions at interendothelial junctions. Acts as a regulator of cell migration, probably via increasing cell-cell adhesion. Promotes homotypic calcium-dependent aggregation and adhesion and clusters at intercellular junctions. Unable to bind to catenins, weakly associates with the cytoskeleton. This is Protocadherin-12 from Homo sapiens (Human).